Here is a 164-residue protein sequence, read N- to C-terminus: Proline-rich protein 2 (164 aa).

A signal peptide spans 1-21 (MNLKVGIAVLIIALIVPSAQP).

Component of the acid-soluble organic matrix of calcified layers of the shell (at protein level).

It is found in the secreted. In Lottia gigantea (Giant owl limpet), this protein is Proline-rich protein 2.